A 315-amino-acid polypeptide reads, in one-letter code: Eukaryotic translation initiation factor 2 subunit 1 (315 aa).

The region spanning 17-88 (EDVVMVNVRS…EKGYIDLSKR (72 aa)) is the S1 motif domain. At Ser49 the chain carries Phosphoserine; by HRI. Ser52 is modified (phosphoserine). The residue at position 141 (Lys141) is an N6-acetyllysine. The residue at position 158 (Ser158) is a Phosphoserine. Thr279 and Thr281 each carry phosphothreonine. The tract at residues 293–315 (LERENAEVDGDDDAEEMEAKAED) is disordered. The span at 299–308 (EVDGDDDAEE) shows a compositional bias: acidic residues.

This sequence belongs to the eIF-2-alpha family. In terms of assembly, eukaryotic translation initiation factor 2 eIF2 is a heterotrimeric complex composed of an alpha (EIF2S1), a beta (EIF2S2) and a gamma (EIF2S3) chain. eIF2 is member of the 43S pre-initiation complex (43S PIC). eIF2 forms a complex with at least CELF1/CUGBP1, CALR, CALR3, EIF2S1, EIF2S2, HSP90B1 and HSPA5. Interaction with METAP2 protects EIF2S1 from inhibitory phosphorylation. Interacts with ABCF1 isoform 2. Associates with ribosomes. Interacts with DDX3X in an RNA-independent manner. Interacts with CDC123. As to quaternary structure, (Microbial infection) Interacts with rotavirus A non-structural protein 2; this interaction probably plays a role in the sequestration of IF2A in viral factories. Interacts with rotavirus A non-structural protein 5; this interaction probably plays a role in its sequestration in viral factories. Phosphorylation at Ser-49 and Ser-52 stabilizes the eIF-2/GDP/eIF2B complex and prevents GDP/GTP exchange reaction, thus impairing the recycling of eIF-2 between successive rounds of initiation and leading to global inhibition of translation, while concomitantly initiating the preferential translation of integrated stress response (ISR)-specific mRNAs. Substrate for at least 4 kinases: EIF2AK1/HRI, EIF2AK2/PKR, EIF2AK3/PERK and EIF2AK4/GCN2. Phosphorylation on Ser-52 by the EIF2AK4/GCN2 protein kinase occurs in response to amino acid starvation and UV irradiation. Phosphorylation at Ser-52 by the EIF2AK3/PERK protein kinase occurs in response to the unfolded protein response. Phosphorylation at Ser-52 by EIF2AK1/HRI in response to mitochondrial damage promotes relocalization to the mitochondrial surface. In terms of processing, (Microbial infection) Phosphorylation by vaccinia virus protein E3 and rotavirus A stabilizes the eIF-2/GDP/eIF2B complex and prevents GDP/GTP exchange reaction, thus impairing the recycling of eIF-2 between successive rounds of initiation and leading to global inhibition of translation.

The protein resides in the cytoplasm. Its subcellular location is the stress granule. It localises to the cytosol. The protein localises to the mitochondrion. Its activity is regulated as follows. Activity is regulated by phosphorylation at Ser-49 and Ser-52, which stabilizes the eIF2/GDP/eIF2B complex and prevents the eIF2B-mediated exchange of GDP for GTP, thereby preventing the formation of the 43S pre-initiation complex (43S PIC). This results in the global attenuation of 5' cap-dependent protein synthesis and concomitant translation of ISR-specific mRNAs that contain a short upstream open reading frame (uORF) in their 5' UTR, such as ATF4, ATF5, DDIT3/CHOP and PPP1R15A/GADD34. In terms of biological role, member of the eIF2 complex that functions in the early steps of protein synthesis by forming a ternary complex with GTP and initiator tRNA. This complex binds to a 40S ribosomal subunit, followed by mRNA binding to form a 43S pre-initiation complex (43S PIC). Junction of the 60S ribosomal subunit to form the 80S initiation complex is preceded by hydrolysis of the GTP bound to eIF2 and release of an eIF2-GDP binary complex. In order for eIF2 to recycle and catalyze another round of initiation, the GDP bound to eIF2 must exchange with GTP by way of a reaction catalyzed by eIF2B. EIF2S1/eIF2-alpha is a key component of the integrated stress response (ISR), required for adaptation to various stress: phosphorylation by metabolic-stress sensing protein kinases (EIF2AK1/HRI, EIF2AK2/PKR, EIF2AK3/PERK and EIF2AK4/GCN2) in response to stress converts EIF2S1/eIF2-alpha in a global protein synthesis inhibitor, leading to an attenuation of cap-dependent translation, while concomitantly initiating the preferential translation of ISR-specific mRNAs, such as the transcriptional activators ATF4 and QRICH1, and hence allowing ATF4- and QRICH1-mediated reprogramming. EIF2S1/eIF2-alpha also acts as an activator of mitophagy in response to mitochondrial damage: phosphorylation by EIF2AK1/HRI promotes relocalization to the mitochondrial surface, thereby triggering PRKN-independent mitophagy. In Homo sapiens (Human), this protein is Eukaryotic translation initiation factor 2 subunit 1.